Reading from the N-terminus, the 274-residue chain is tRNA pseudouridine synthase A (274 aa).

Asp56 (nucleophile) is an active-site residue. A substrate-binding site is contributed by Tyr109.

It belongs to the tRNA pseudouridine synthase TruA family.

It carries out the reaction uridine(38/39/40) in tRNA = pseudouridine(38/39/40) in tRNA. In terms of biological role, formation of pseudouridine at positions 38, 39 and 40 in the anticodon stem and loop of transfer RNAs. The protein is tRNA pseudouridine synthase A of Methanosphaera stadtmanae (strain ATCC 43021 / DSM 3091 / JCM 11832 / MCB-3).